The chain runs to 454 residues: Bifunctional protein GlmU (454 aa).

Positions 1-233 (MTNRTCLAVI…RESAVGINNR (233 aa)) are pyrophosphorylase. Residues 11–14 (LAAG), lysine 25, glutamine 79, and 84–85 (GT) contribute to the UDP-N-acetyl-alpha-D-glucosamine site. Aspartate 109 lines the Mg(2+) pocket. UDP-N-acetyl-alpha-D-glucosamine-binding residues include glycine 145, glutamate 159, asparagine 174, and asparagine 231. Mg(2+) is bound at residue asparagine 231. Positions 234–254 (AELAEAEAVWQQKRRRELMLS) are linker. Residues 255–454 (GVTLIAPETV…AEEKAKKSGG (200 aa)) are N-acetyltransferase. Arginine 320 and lysine 338 together coordinate UDP-N-acetyl-alpha-D-glucosamine. Histidine 350 serves as the catalytic Proton acceptor. Positions 353 and 364 each coordinate UDP-N-acetyl-alpha-D-glucosamine. Acetyl-CoA is bound by residues alanine 367, 373–374 (NY), serine 410, and arginine 427.

It in the N-terminal section; belongs to the N-acetylglucosamine-1-phosphate uridyltransferase family. The protein in the C-terminal section; belongs to the transferase hexapeptide repeat family. In terms of assembly, homotrimer. Requires Mg(2+) as cofactor.

Its subcellular location is the cytoplasm. The catalysed reaction is alpha-D-glucosamine 1-phosphate + acetyl-CoA = N-acetyl-alpha-D-glucosamine 1-phosphate + CoA + H(+). It carries out the reaction N-acetyl-alpha-D-glucosamine 1-phosphate + UTP + H(+) = UDP-N-acetyl-alpha-D-glucosamine + diphosphate. It participates in nucleotide-sugar biosynthesis; UDP-N-acetyl-alpha-D-glucosamine biosynthesis; N-acetyl-alpha-D-glucosamine 1-phosphate from alpha-D-glucosamine 6-phosphate (route II): step 2/2. It functions in the pathway nucleotide-sugar biosynthesis; UDP-N-acetyl-alpha-D-glucosamine biosynthesis; UDP-N-acetyl-alpha-D-glucosamine from N-acetyl-alpha-D-glucosamine 1-phosphate: step 1/1. The protein operates within bacterial outer membrane biogenesis; LPS lipid A biosynthesis. Catalyzes the last two sequential reactions in the de novo biosynthetic pathway for UDP-N-acetylglucosamine (UDP-GlcNAc). The C-terminal domain catalyzes the transfer of acetyl group from acetyl coenzyme A to glucosamine-1-phosphate (GlcN-1-P) to produce N-acetylglucosamine-1-phosphate (GlcNAc-1-P), which is converted into UDP-GlcNAc by the transfer of uridine 5-monophosphate (from uridine 5-triphosphate), a reaction catalyzed by the N-terminal domain. The sequence is that of Bifunctional protein GlmU from Chelativorans sp. (strain BNC1).